Reading from the N-terminus, the 183-residue chain is Ras-related protein Rap-2a (183 aa).

10-17 (GSGGVGKS) serves as a coordination point for GTP. An Effector region motif is present at residues 32-40 (YDPTIEDFY). GTP-binding positions include 57–61 (DTAGT) and 116–119 (NKVD). 2 S-palmitoyl cysteine lipidation sites follow: Cys176 and Cys177. Cys180 carries the cysteine methyl ester modification. Cys180 is lipidated: S-farnesyl cysteine. The propeptide at 181–183 (NIQ) is removed in mature form.

It belongs to the small GTPase superfamily. Ras family. In terms of assembly, interacts with PLCE1. Interacts with ARHGAP29, SGSM1, SGSM2 and SGSM3. Interacts (GTP-bound form preferentially) with MAP4K4. Interacts with MINK1. Interacts with cytoskeletal actin. Interacts (GTP-bound form) with RUNDC3A. Interacts (GTP-bound form preferentially) with TNIK (via the CNH domain); the interaction is direct and recruits RAP2A to the E3 ubiquitin ligase NEDD4. Interacts with RGS14; the interaction is GTP-dependent. In terms of processing, ubiquitinated; undergoes 'Lys-63' monoubiquitination and diubiquitination by NEDD4. Multiple lysine residues are probably modified. Ubiquitination requires TNIK, prevents interaction with effectors and inactivates RAP2A. Ubiquitination by the ECS(RAB40B) complex leads to RAP2A localization to lamellipodia plasma membrane, activation, and regulation of sorting at early endosomes for recycling to the lamellipodia plasma membrane. Post-translationally, palmitoylated. Palmitoylation is required for association with recycling endosome membranes and activation of TNIK. In terms of tissue distribution, expressed in granular layer of the cerebellum, forebrain, striatum, layer V of the cortex, olfactory cortex, tubercules, subthalamic and hippocampus, particularly in the CA2 region, to a lesser extent in the CA1 region and the external layer of the dentate gyrus. Expressed in neurons.

It localises to the midbody. It is found in the cell projection. The protein resides in the lamellipodium membrane. Its subcellular location is the golgi apparatus. The protein localises to the recycling endosome membrane. It localises to the lysosome. The enzyme catalyses GTP + H2O = GDP + phosphate + H(+). Activated by the guanine nucleotide-exchange factors RAPGEF3 and RAPGEF4 in a cAMP-dependent manner. Nucleotide exchange is also specifically stimulated by RAPGEF5, RASGEF1A and RASGEF1B. Functionally, small GTP-binding protein which cycles between a GDP-bound inactive and a GTP-bound active form. In its active form interacts with and regulates several effectors including MAP4K4, MINK1 and TNIK. Part of a signaling complex composed of NEDD4, RAP2A and TNIK which regulates neuronal dendrite extension and arborization during development. More generally, it is part of several signaling cascades and may regulate cytoskeletal rearrangements, cell migration, cell adhesion and cell spreading. The protein is Ras-related protein Rap-2a of Mus musculus (Mouse).